Consider the following 234-residue polypeptide: Leucyl/phenylalanyl-tRNA--protein transferase (234 aa).

The protein belongs to the L/F-transferase family.

The protein resides in the cytoplasm. The enzyme catalyses N-terminal L-lysyl-[protein] + L-leucyl-tRNA(Leu) = N-terminal L-leucyl-L-lysyl-[protein] + tRNA(Leu) + H(+). It carries out the reaction N-terminal L-arginyl-[protein] + L-leucyl-tRNA(Leu) = N-terminal L-leucyl-L-arginyl-[protein] + tRNA(Leu) + H(+). The catalysed reaction is L-phenylalanyl-tRNA(Phe) + an N-terminal L-alpha-aminoacyl-[protein] = an N-terminal L-phenylalanyl-L-alpha-aminoacyl-[protein] + tRNA(Phe). Functions in the N-end rule pathway of protein degradation where it conjugates Leu, Phe and, less efficiently, Met from aminoacyl-tRNAs to the N-termini of proteins containing an N-terminal arginine or lysine. The chain is Leucyl/phenylalanyl-tRNA--protein transferase from Klebsiella pneumoniae (strain 342).